The chain runs to 119 residues: uncharacterized protein (119 aa).

Residues 64 to 119 are disordered; it reads SAPLGLKEVQKKSNEGLNEVQGAADINKQKRPANSQDSSSVEGDIQNFLEKVTGKN. Residues 95–104 are compositionally biased toward polar residues; that stretch reads PANSQDSSSV.

This is an uncharacterized protein from Nostoc sp. (strain PCC 7120 / SAG 25.82 / UTEX 2576).